We begin with the raw amino-acid sequence, 133 residues long: Small ribosomal subunit protein uS8 (133 aa).

It belongs to the universal ribosomal protein uS8 family. As to quaternary structure, part of the 30S ribosomal subunit. Contacts proteins S5 and S12.

In terms of biological role, one of the primary rRNA binding proteins, it binds directly to 16S rRNA central domain where it helps coordinate assembly of the platform of the 30S subunit. The polypeptide is Small ribosomal subunit protein uS8 (Micrococcus luteus (Micrococcus lysodeikticus)).